We begin with the raw amino-acid sequence, 934 residues long: Protein unc-45 homolog B (934 aa).

TPR repeat units lie at residues 9–42, 48–81, and 83–115; these read SVQL…CKKE, AVIY…DAAD, and KALY…EPKN. ARM repeat units follow at residues 174–213, 216–255, and 753–792; these read DAGA…GMCT, RARA…CVND, and DKLR…NLVC.

In terms of assembly, interacts with apobec2a, apobec2b, hsp90a.1, hsp90a.2, hsp90ab1 and myosin. In terms of tissue distribution, expressed in striated muscle tissue including somites, heart and craniofacial muscle. Detected in mesoderm adjacent to the dorsal midline during the late gastrula stages and in somitic mesoderm during development of trunk skeletal muscle. Also expressed in cranial skeletal muscle and in cardiac and smooth muscle. Detected in somitic muscle and heart primordium of 24 hour embryos. At later stages, expressed in muscles of pectoral fins, jaw, branchial arches and eye.

The protein localises to the cytoplasm. It is found in the myofibril. It localises to the sarcomere. The protein resides in the z line. Its subcellular location is the a band. The protein localises to the perinuclear region. Its function is as follows. Acts as a co-chaperone for HSP90 and is required for proper folding of the myosin motor domain. Plays a role in sarcomere formation during muscle cell development. Required for myoseptal integrity, myofiber attachment, motility and craniofacial development. Is necessary for normal early lens development. The chain is Protein unc-45 homolog B from Danio rerio (Zebrafish).